Reading from the N-terminus, the 46-residue chain is MKVLNSLRTAKERHPDCQIVKRKGRLYVICKSNPRFKAVQGRKKKR.

Belongs to the bacterial ribosomal protein bL36 family.

The polypeptide is Large ribosomal subunit protein bL36 (Escherichia coli O7:K1 (strain IAI39 / ExPEC)).